Reading from the N-terminus, the 567-residue chain is uncharacterized protein (567 aa).

Helical transmembrane passes span 65 to 85 (LSLF…PSVA), 92 to 112 (LWYV…FFLI), 190 to 210 (WQWF…ACLP), 220 to 240 (VATY…LAYG), 302 to 322 (AIVM…IIVA), 353 to 373 (LGIL…ALIA), 412 to 432 (IISI…DAVF), 434 to 454 (VGAV…VFFT), 473 to 493 (IGLL…FPSV), and 503 to 523 (WTCL…AISA).

This sequence belongs to the amino acid-polyamine-organocation (APC) superfamily.

The protein resides in the membrane. This is an uncharacterized protein from Schizosaccharomyces pombe (strain 972 / ATCC 24843) (Fission yeast).